We begin with the raw amino-acid sequence, 694 residues long: Junctophilin-2 (694 aa).

The Cytoplasmic segment spans residues 1 to 672 (MSGGRFDFDD…EVEVEEVPNT (672 aa)). 6 MORN repeats span residues 14-36 (YCGGWEGGKAHGHGLCTGPKGQG), 38-59 (YSGSWNFGFEVAGVYTWPSGNT), 60-79 (FEGYWSQGKRHGLGIETKGR), 82-104 (YKGEWTHGFKGRYGTRQSTSSGA), 106-128 (YEGTWNNGLQDGYGTETYADGGT), and 129-151 (YQGQFTNGMRHGYGVRQSVPYGM). 2 positions are modified to phosphoserine: Ser-162 and Ser-165. Disordered regions lie at residues 164–192 (SSLRSEHSNGTVAPDSPASPAADGPALPS) and 231–278 (RAES…AAPF). Residues 176-189 (APDSPASPAADGPA) show a composition bias toward low complexity. Polar residues predominate over residues 235–244 (RTSVGSQRSR). Positions 250 to 267 (SDLSSGASDAASTASLGE) are enriched in low complexity. 2 MORN repeats span residues 290–312 (YMGEWKNDKRSGFGVSERSSGLR) and 313–335 (YEGEWLDNLRHGYGCTTLPDGHR). The Bipartite nuclear localization signal signature appears at 350–364 (KRRVLPLKSNKVRQK). Ser-445, Ser-447, and Ser-466 each carry phosphoserine. The interval 448–663 (LLEPPDRGAA…KEAAQAAEAE (216 aa)) is disordered. The span at 467–476 (PQLHERETPR) shows a compositional bias: basic and acidic residues. Residue Thr-474 is modified to Phosphothreonine. Pro residues predominate over residues 478–491 (EGGPPSPAGTPPQP). At Ser-483 the chain carries Phosphoserine. At Thr-487 the chain carries Phosphothreonine. Positions 492 to 496 (KRPRP) match the Nuclear localization signal motif. A compositionally biased stretch (low complexity) spans 522–540 (SRPATPAAAGAGRRSPARP). Residues Ser-536, Ser-542, Ser-596, and Ser-600 each carry the phosphoserine modification. Residues 589-610 (PEAADPDSAPASPATAPGQAPA) are compositionally biased toward low complexity. A helical; Anchor for type IV membrane protein membrane pass occupies residues 673-693 (VLICMVILLNIGLAILFVHLL).

The protein belongs to the junctophilin family. Interacts with TRPC3. Interacts with BAG5 and HSPA8; the interaction with HSPA8 is increased in the presence of BAG5. Junctophilin-2 N-terminal fragment: Interacts with MEF2C. Proteolytically cleaved by calpain in response to cardiac stress. The major cleavage site takes place at the C-terminus and leads to the release of the Junctophilin-2 N-terminal fragment chain (JP2NT). In terms of processing, phosphorylation on Ser-165, probably by PKC, affects RYR1-mediated calcium ion release, interaction with TRPC3, and skeletal muscle myotubule development.

The protein resides in the cell membrane. It is found in the sarcoplasmic reticulum membrane. Its subcellular location is the endoplasmic reticulum membrane. It localises to the nucleus. Functionally, membrane-binding protein that provides a structural bridge between the plasma membrane and the sarcoplasmic reticulum and is required for normal excitation-contraction coupling in cardiomyocytes. Provides a structural foundation for functional cross-talk between the cell surface and intracellular Ca(2+) release channels by maintaining the 12-15 nm gap between the sarcolemma and the sarcoplasmic reticulum membranes in the cardiac dyads. Necessary for proper intracellular Ca(2+) signaling in cardiac myocytes via its involvement in ryanodine receptor-mediated calcium ion release. Contributes to the construction of skeletal muscle triad junctions. Transcription repressor required to safeguard against the deleterious effects of cardiac stress. Generated following cleavage of the Junctophilin-2 chain by calpain in response to cardiac stress in cardiomyocytes. Following cleavage and release from the membrane, translocates to the nucleus, binds DNA and represses expression of genes implicated in cell growth and differentiation, hypertrophy, inflammation and fibrosis. Modifies the transcription profile and thereby attenuates pathological remodeling in response to cardiac stress. Probably acts by competing with MEF2 transcription factors and TATA-binding proteins. The polypeptide is Junctophilin-2 (JPH2) (Oryctolagus cuniculus (Rabbit)).